The chain runs to 86 residues: Cytochrome c oxidase subunit 6B1 (86 aa).

Alanine 2 bears the N-acetylalanine mark. The CHCH domain occupies 27–73 (TRNCWQNYLDFHRCEKAMTAKGGDVSVCEWYRRVYKSLCPISWVSTW). A Cx9C motif motif is present at residues 30 to 40 (CWQNYLDFHRC). 2 disulfide bridges follow: cysteine 30–cysteine 65 and cysteine 40–cysteine 54. The Cx10C motif signature appears at 54 to 65 (CEWYRRVYKSLC). Lysine 62 carries the N6-acetyllysine modification.

Belongs to the cytochrome c oxidase subunit 6B family. In terms of assembly, component of the cytochrome c oxidase (complex IV, CIV), a multisubunit enzyme composed of 14 subunits. The complex is composed of a catalytic core of 3 subunits MT-CO1, MT-CO2 and MT-CO3, encoded in the mitochondrial DNA, and 11 supernumerary subunits COX4I, COX5A, COX5B, COX6A, COX6B, COX6C, COX7A, COX7B, COX7C, COX8 and NDUFA4, which are encoded in the nuclear genome. The complex exists as a monomer or a dimer and forms supercomplexes (SCs) in the inner mitochondrial membrane with NADH-ubiquinone oxidoreductase (complex I, CI) and ubiquinol-cytochrome c oxidoreductase (cytochrome b-c1 complex, complex III, CIII), resulting in different assemblies (supercomplex SCI(1)III(2)IV(1) and megacomplex MCI(2)III(2)IV(2)).

The protein resides in the mitochondrion inner membrane. It participates in energy metabolism; oxidative phosphorylation. Functionally, component of the cytochrome c oxidase, the last enzyme in the mitochondrial electron transport chain which drives oxidative phosphorylation. The respiratory chain contains 3 multisubunit complexes succinate dehydrogenase (complex II, CII), ubiquinol-cytochrome c oxidoreductase (cytochrome b-c1 complex, complex III, CIII) and cytochrome c oxidase (complex IV, CIV), that cooperate to transfer electrons derived from NADH and succinate to molecular oxygen, creating an electrochemical gradient over the inner membrane that drives transmembrane transport and the ATP synthase. Cytochrome c oxidase is the component of the respiratory chain that catalyzes the reduction of oxygen to water. Electrons originating from reduced cytochrome c in the intermembrane space (IMS) are transferred via the dinuclear copper A center (CU(A)) of subunit 2 and heme A of subunit 1 to the active site in subunit 1, a binuclear center (BNC) formed by heme A3 and copper B (CU(B)). The BNC reduces molecular oxygen to 2 water molecules using 4 electrons from cytochrome c in the IMS and 4 protons from the mitochondrial matrix. The chain is Cytochrome c oxidase subunit 6B1 (COX6B1) from Carlito syrichta (Philippine tarsier).